The sequence spans 57 residues: UPF0337 protein SAV_1088 (57 aa).

Composition is skewed to basic and acidic residues over residues 1 to 15 (MAGD…EQAK) and 36 to 57 (QAEK…VFKH). The interval 1–57 (MAGDQKAKAKMEQAKGKAKAAAGRAVGNERMAAEGQAEKSKGDARQAKEKTKDVFKH) is disordered.

The protein belongs to the UPF0337 (CsbD) family.

This Streptomyces avermitilis (strain ATCC 31267 / DSM 46492 / JCM 5070 / NBRC 14893 / NCIMB 12804 / NRRL 8165 / MA-4680) protein is UPF0337 protein SAV_1088.